Consider the following 276-residue polypeptide: Undecaprenyl-diphosphatase (276 aa).

The next 6 membrane-spanning stretches (helical) occupy residues 43-63, 85-105, 109-129, 183-203, 214-234, and 249-269; these read RAMAFNIIIQLAAILAVVWEF, GNLLLAFMPAVVLGVLFADLI, LFNPVTVAAALVVGGVIMLWA, AATEFSFFLAMPTMVGAAVYS, GDLPVFALGFVTSFIFAMIAV, and FAWYRIVFGLFILATWQFGWV.

The protein belongs to the UppP family.

Its subcellular location is the cell inner membrane. The enzyme catalyses di-trans,octa-cis-undecaprenyl diphosphate + H2O = di-trans,octa-cis-undecaprenyl phosphate + phosphate + H(+). Its function is as follows. Catalyzes the dephosphorylation of undecaprenyl diphosphate (UPP). Confers resistance to bacitracin. This Pseudomonas putida (strain ATCC 700007 / DSM 6899 / JCM 31910 / BCRC 17059 / LMG 24140 / F1) protein is Undecaprenyl-diphosphatase.